Consider the following 105-residue polypeptide: Type VII secretion system extracellular protein D (105 aa).

As to quaternary structure, forms heterodimers with EsxB.

The protein resides in the secreted. The sequence is that of Type VII secretion system extracellular protein D from Staphylococcus aureus (strain USA300).